We begin with the raw amino-acid sequence, 316 residues long: UDP-N-acetyl-2-amino-2-deoxy-D-glucuronate oxidase (316 aa).

NAD(+) contacts are provided by residues 11–13 (GYI), 32–37 (YDINDS), E55, 81–84 (NYLH), 101–102 (EK), Q130, and 171–172 (WK).

Belongs to the Gfo/Idh/MocA family. In terms of assembly, homotetramer.

It carries out the reaction UDP-2-acetamido-2-deoxy-alpha-D-glucuronate + NAD(+) = UDP-2-acetamido-2-deoxy-alpha-D-ribo-hex-3-uluronate + NADH + H(+). It catalyses the reaction 2-hydroxyglutarate + NAD(+) = 2-oxoglutarate + NADH + H(+). It functions in the pathway bacterial outer membrane biogenesis; LPS O-antigen biosynthesis. In terms of biological role, plays a role in the biosynthesis of B-band O antigen for serotype O5. Catalyzes the NAD-dependent oxidation of UDP-N-acetylglucosaminuronic acid (UDP-D-GlcNAcA) to UDP-2-acetamido-2-deoxy-3-oxo-D-glucuronic acid (UDP-3-oxo-D-GlcNAcA). Cannot use UDP-GlcNAc or UDP-GalNAc as the nucleotide sugar substrate, and can use only poorly UDP-D-glucuronic acid (UDP-GlcA). Undergoes an NAD(+) recycling mechanism using 2-oxoglutarate as an oxidant. The polypeptide is UDP-N-acetyl-2-amino-2-deoxy-D-glucuronate oxidase (Pseudomonas aeruginosa (strain ATCC 15692 / DSM 22644 / CIP 104116 / JCM 14847 / LMG 12228 / 1C / PRS 101 / PAO1)).